A 249-amino-acid polypeptide reads, in one-letter code: Octanoyltransferase (249 aa).

The BPL/LPL catalytic domain occupies 53–234; it reads PDTDDEIWVV…RLIAHLDGAT (182 aa). Substrate is bound by residues 93–100, 165–167, and 178–180; these read RGGQITYH, ALG, and GLS. Cys196 serves as the catalytic Acyl-thioester intermediate.

It belongs to the LipB family.

The protein localises to the cytoplasm. The enzyme catalyses octanoyl-[ACP] + L-lysyl-[protein] = N(6)-octanoyl-L-lysyl-[protein] + holo-[ACP] + H(+). It participates in protein modification; protein lipoylation via endogenous pathway; protein N(6)-(lipoyl)lysine from octanoyl-[acyl-carrier-protein]: step 1/2. In terms of biological role, catalyzes the transfer of endogenously produced octanoic acid from octanoyl-acyl-carrier-protein onto the lipoyl domains of lipoate-dependent enzymes. Lipoyl-ACP can also act as a substrate although octanoyl-ACP is likely to be the physiological substrate. The chain is Octanoyltransferase from Burkholderia mallei (strain NCTC 10247).